A 135-amino-acid polypeptide reads, in one-letter code: Glutaredoxin-C5 (135 aa).

In terms of domain architecture, Glutaredoxin spans 29–134 (AERVERLASE…PLLKEAGALW (106 aa)). The cysteines at positions 49 and 52 are disulfide-linked. The short motif at 132–135 (ALWL) is the Responsive for interaction with TGA factors element.

This sequence belongs to the glutaredoxin family. CC-type subfamily.

It is found in the cytoplasm. The protein resides in the nucleus. Has a glutathione-disulfide oxidoreductase activity in the presence of NADPH and glutathione reductase. Reduces low molecular weight disulfides and proteins. This Oryza sativa subsp. japonica (Rice) protein is Glutaredoxin-C5 (GRXC5).